The sequence spans 108 residues: Phosphoribosyl-AMP cyclohydrolase (108 aa).

Asp73 contacts Mg(2+). Cys74 contacts Zn(2+). Mg(2+)-binding residues include Asp75 and Asp77. Zn(2+) is bound by residues Cys90 and Cys97.

Belongs to the PRA-CH family. Homodimer. Mg(2+) serves as cofactor. Requires Zn(2+) as cofactor.

It is found in the cytoplasm. The enzyme catalyses 1-(5-phospho-beta-D-ribosyl)-5'-AMP + H2O = 1-(5-phospho-beta-D-ribosyl)-5-[(5-phospho-beta-D-ribosylamino)methylideneamino]imidazole-4-carboxamide. It participates in amino-acid biosynthesis; L-histidine biosynthesis; L-histidine from 5-phospho-alpha-D-ribose 1-diphosphate: step 3/9. Catalyzes the hydrolysis of the adenine ring of phosphoribosyl-AMP. The sequence is that of Phosphoribosyl-AMP cyclohydrolase from Lactiplantibacillus plantarum (strain ATCC BAA-793 / NCIMB 8826 / WCFS1) (Lactobacillus plantarum).